The primary structure comprises 186 residues: UPF0398 protein LCA_0919 (186 aa).

Belongs to the UPF0398 family.

The polypeptide is UPF0398 protein LCA_0919 (Latilactobacillus sakei subsp. sakei (strain 23K) (Lactobacillus sakei subsp. sakei)).